A 144-amino-acid polypeptide reads, in one-letter code: Ribosome-binding factor A (144 aa).

Residues 121-144 (KAQTGVEEPLENTAEGEENPSGGE) form a disordered region. Positions 128–138 (EPLENTAEGEE) are enriched in acidic residues.

It belongs to the RbfA family. Monomer. Binds 30S ribosomal subunits, but not 50S ribosomal subunits or 70S ribosomes.

Its subcellular location is the cytoplasm. Its function is as follows. One of several proteins that assist in the late maturation steps of the functional core of the 30S ribosomal subunit. Associates with free 30S ribosomal subunits (but not with 30S subunits that are part of 70S ribosomes or polysomes). Required for efficient processing of 16S rRNA. May interact with the 5'-terminal helix region of 16S rRNA. This Synechococcus sp. (strain JA-2-3B'a(2-13)) (Cyanobacteria bacterium Yellowstone B-Prime) protein is Ribosome-binding factor A.